A 522-amino-acid chain; its full sequence is 2-isopropylmalate synthase (522 aa).

One can recognise a Pyruvate carboxyltransferase domain in the interval 5–267; the sequence is VIIFDTTLRD…HTRINHQEIY (263 aa). Residues D14, H202, H204, and N238 each contribute to the Mn(2+) site. Residues 392–522 are regulatory domain; sequence RLDTFNVQSG…SQVKDQKETV (131 aa).

It belongs to the alpha-IPM synthase/homocitrate synthase family. LeuA type 1 subfamily. Homodimer. It depends on Mn(2+) as a cofactor.

The protein resides in the cytoplasm. It catalyses the reaction 3-methyl-2-oxobutanoate + acetyl-CoA + H2O = (2S)-2-isopropylmalate + CoA + H(+). It participates in amino-acid biosynthesis; L-leucine biosynthesis; L-leucine from 3-methyl-2-oxobutanoate: step 1/4. Functionally, catalyzes the condensation of the acetyl group of acetyl-CoA with 3-methyl-2-oxobutanoate (2-ketoisovalerate) to form 3-carboxy-3-hydroxy-4-methylpentanoate (2-isopropylmalate). This Erwinia tasmaniensis (strain DSM 17950 / CFBP 7177 / CIP 109463 / NCPPB 4357 / Et1/99) protein is 2-isopropylmalate synthase.